We begin with the raw amino-acid sequence, 290 residues long: Glycine--tRNA ligase alpha subunit (290 aa).

This sequence belongs to the class-II aminoacyl-tRNA synthetase family. As to quaternary structure, tetramer of two alpha and two beta subunits.

It localises to the cytoplasm. The catalysed reaction is tRNA(Gly) + glycine + ATP = glycyl-tRNA(Gly) + AMP + diphosphate. The polypeptide is Glycine--tRNA ligase alpha subunit (Prochlorococcus marinus (strain NATL1A)).